The sequence spans 888 residues: Glutamate receptor 3 (888 aa).

The N-terminal stretch at 1–22 (MGQSVLRAVFFLVLGLLGHSHG) is a signal peptide. The Extracellular portion of the chain corresponds to 23 to 546 (GFPNTISIGG…GVFSFLDPLA (524 aa)). N-linked (GlcNAc...) asparagine glycosylation is found at asparagine 57, asparagine 260, asparagine 374, asparagine 409, and asparagine 416. Cysteines 85 and 334 form a disulfide. 3 residues coordinate L-glutamate: proline 502, threonine 504, and arginine 509. Residues 547 to 567 (YEIWMCIVFAYIGVSVVLFLV) traverse the membrane as a helical segment. At 568–596 (SRFSPYEWHLEDNNEEPRDPQSPPDPPNE) the chain is on the cytoplasmic side. Positions 597–612 (FGIFNSLWFSLGAFMQ) form an intramembrane region, helical; Pore-forming. Residues 613-615 (QGC) lie within the membrane without spanning it. Cysteine 615 is lipidated: S-palmitoyl cysteine. At 616–621 (DISPRS) the chain is on the cytoplasmic side. A helical membrane pass occupies residues 622–642 (LSGRIVGGVWWFFTLIIISSY). Residues 643-817 (TANLAAFLTV…DKTSALSLSN (175 aa)) are Extracellular-facing. 3 residues coordinate L-glutamate: serine 680, threonine 681, and glutamate 731. Cysteine 744 and cysteine 799 are disulfide-bonded. A helical membrane pass occupies residues 818–838 (VAGVFYILVGGLGLAMMVALI). Residues 839-888 (EFCYKSRAESKRMKLTKNTQNFKPAPATNTQNYATYREGYNVYGTESVKI) are Cytoplasmic-facing. A lipid anchor (S-palmitoyl cysteine) is attached at cysteine 841. Tyrosine 871 and tyrosine 881 each carry phosphotyrosine.

Belongs to the glutamate-gated ion channel (TC 1.A.10.1) family. GRIA3 subfamily. As to quaternary structure, homotetramer or heterotetramer of pore-forming glutamate receptor subunits. Tetramers may be formed by the dimerization of dimers. Interacts with PICK1, GRIP1 and GRIP2. Found in a complex with GRIA1, GRIA2, GRIA4, CNIH2, CNIH3, CACNG2, CACNG3, CACNG4, CACNG5, CACNG7 and CACNG8. Interacts with CACNG5. Found in a complex with GRIA1, GRIA2, GRIA4, DLG4, CACNG8 and CNIH2.

The protein localises to the cell membrane. It localises to the postsynaptic cell membrane. It is found in the postsynaptic density membrane. It carries out the reaction Ca(2+)(in) = Ca(2+)(out). In terms of biological role, ionotropic glutamate receptor that functions as a ligand-gated cation channel, gated by L-glutamate and glutamatergic agonists such as alpha-amino-3-hydroxy-5-methyl-4-isoxazolepropionic acid (AMPA), quisqualic acid, and kainic acid. L-glutamate acts as an excitatory neurotransmitter at many synapses in the central nervous system and plays an important role in fast excitatory synaptic transmission by inducing long-term potentiation. Binding of the excitatory neurotransmitter L-glutamate induces a conformation change, leading to the opening of the cation channel, and thereby converts the chemical signal to an electrical impulse upon entry of calcium. The receptor then desensitizes rapidly and enters a transient inactive state, characterized by the presence of bound agonist. In the presence of CACNG8, shows resensitization which is characterized by a delayed accumulation of current flux upon continued application of glutamate. The protein is Glutamate receptor 3 of Rattus norvegicus (Rat).